The following is a 92-amino-acid chain: Protein EMB-1 (92 aa).

Basic and acidic residues-rich tracts occupy residues 1-16 (MASQ…RARQ), 37-61 (AEGR…EMGR), and 72-92 (GGER…RTKK). Residues 1–92 (MASQQEKKEL…IDESKFRTKK (92 aa)) are disordered.

The protein belongs to the small hydrophilic plant seed protein family. As to expression, expressed in embryogenic cells, somatic embryos and seeds at the later stages of development. In the embryos, expressed in the procambium, the root and shoot meristem and the protoderm of the cotyledons. Not detected in the endosperm or the aleurone layer, in young leaves or roots.

The protein resides in the nucleus. In Daucus carota (Wild carrot), this protein is Protein EMB-1.